A 90-amino-acid polypeptide reads, in one-letter code: Small ribosomal subunit protein uS15c (90 aa).

It belongs to the universal ribosomal protein uS15 family. As to quaternary structure, part of the 30S ribosomal subunit.

The protein localises to the plastid. It is found in the chloroplast. This Lolium perenne (Perennial ryegrass) protein is Small ribosomal subunit protein uS15c (rps15-A).